A 388-amino-acid chain; its full sequence is Arrestin-C (388 aa).

Belongs to the arrestin family. In terms of assembly, homodimer; disulfide-linked in response to retinal illumination. Interacts with CXCR4; the interaction is dependent on the C-terminal phosphorylation of CXCR4 and modulates the calcium ion mobilization activity of CXCR4. Interacts with GPR84. Inner and outer segments, and the inner plexiform regions of the retina.

The protein resides in the photoreceptor inner segment. It is found in the cell projection. Its subcellular location is the cilium. The protein localises to the photoreceptor outer segment. Its function is as follows. May play a role in an as yet undefined retina-specific signal transduction. Could bind to photoactivated-phosphorylated red/green opsins. This chain is Arrestin-C (ARR3), found in Homo sapiens (Human).